The chain runs to 326 residues: N-(2-amino-2-carboxyethyl)-L-glutamate synthase (326 aa).

N6-(pyridoxal phosphate)lysine is present on K47. Pyridoxal 5'-phosphate-binding positions include N77, S185–S189, and S272.

The protein belongs to the cysteine synthase/cystathionine beta-synthase family. SbnA subfamily. As to quaternary structure, homodimer. The cofactor is pyridoxal 5'-phosphate.

The enzyme catalyses O-phospho-L-serine + L-glutamate = N-[(2S)-2-amino-2-carboxyethyl]-L-glutamate + phosphate + H(+). It functions in the pathway siderophore biosynthesis. Functionally, catalyzes the synthesis of N-((2S)-2-amino-2-carboxyethyl)-L-glutamate (ACEGA) from O-phospho-L-serine and L-glutamate. Involved in the biosynthesis of L-2,3-diaminopropionic acid (L-Dap), a precursor of staphyloferrin B and antibiotics. In Staphylococcus aureus (strain N315), this protein is N-(2-amino-2-carboxyethyl)-L-glutamate synthase (sbnA).